The sequence spans 123 residues: Acidic phospholipase A2 (123 aa).

Disulfide bonds link Cys-26–Cys-116, Cys-28–Cys-44, Cys-43–Cys-95, Cys-49–Cys-123, Cys-50–Cys-88, Cys-57–Cys-81, and Cys-75–Cys-86. 3 residues coordinate Ca(2+): Tyr-27, Gly-29, and Gly-31. Residue His-47 is part of the active site. A Ca(2+)-binding site is contributed by Asp-48. Residue Asp-89 is part of the active site.

Belongs to the phospholipase A2 family. Group II subfamily. D49 sub-subfamily. Homodimer. Ca(2+) is required as a cofactor. In terms of tissue distribution, expressed by the venom gland.

The protein resides in the secreted. The enzyme catalyses a 1,2-diacyl-sn-glycero-3-phosphocholine + H2O = a 1-acyl-sn-glycero-3-phosphocholine + a fatty acid + H(+). Its function is as follows. Snake venom phospholipase A2 (PLA2) that inhibits ADP-induced platelet aggregation. PLA2 catalyzes the calcium-dependent hydrolysis of the 2-acyl groups in 3-sn-phosphoglycerides. In Deinagkistrodon acutus (Hundred-pace snake), this protein is Acidic phospholipase A2.